The following is a 277-amino-acid chain: Sulfur carrier protein FdhD (277 aa).

Catalysis depends on Cys121, which acts as the Cysteine persulfide intermediate. Residue 260-265 (FCKPGR) participates in Mo-bis(molybdopterin guanine dinucleotide) binding.

It belongs to the FdhD family.

Its subcellular location is the cytoplasm. Functionally, required for formate dehydrogenase (FDH) activity. Acts as a sulfur carrier protein that transfers sulfur from IscS to the molybdenum cofactor prior to its insertion into FDH. The protein is Sulfur carrier protein FdhD of Shigella dysenteriae serotype 1 (strain Sd197).